We begin with the raw amino-acid sequence, 218 residues long: Kynurenine formamidase (218 aa).

A substrate-binding site is contributed by tryptophan 27. Residues histidine 57, histidine 61, and aspartate 63 each coordinate Zn(2+). Catalysis depends on histidine 67, which acts as the Proton donor/acceptor. Zn(2+) is bound by residues histidine 169 and glutamate 181.

This sequence belongs to the Cyclase 1 superfamily. KynB family. In terms of assembly, homodimer. Requires Zn(2+) as cofactor.

The enzyme catalyses N-formyl-L-kynurenine + H2O = L-kynurenine + formate + H(+). Its pathway is amino-acid degradation; L-tryptophan degradation via kynurenine pathway; L-kynurenine from L-tryptophan: step 2/2. Inhibited by EDTA. Insensitive to phenylmethylsulfonyl fluoride (PMSF). In terms of biological role, catalyzes the hydrolysis of N-formyl-L-kynurenine to L-kynurenine, the second step in the kynurenine pathway of tryptophan degradation. This chain is Kynurenine formamidase, found in Cupriavidus metallidurans (strain ATCC 43123 / DSM 2839 / NBRC 102507 / CH34) (Ralstonia metallidurans).